A 368-amino-acid polypeptide reads, in one-letter code: Cyanide hydratase (368 aa).

The region spanning 6-285 (YKAAVVTSEP…DGLMYVDIDL (280 aa)) is the CN hydrolase domain. The active-site Proton acceptor is the Glu46. The active site involves Lys128. The active-site Nucleophile is Cys163. The interval 341–368 (LDRPLEEEDYRQGTDAGETEKASSNGHA) is disordered.

This sequence belongs to the carbon-nitrogen hydrolase superfamily. Nitrilase family. In terms of assembly, oligomer of dimers, forming left-handed helical fibers.

It catalyses the reaction formamide = hydrogen cyanide + H2O. Catalyzes the hydration of cyanide to formamide. Degradation of cyanide may be important for plant pathogenic fungi in infection of cyanogenic plants. The sequence is that of Cyanide hydratase from Microdochium sorghi (Zonate leaf spot disease fungus).